We begin with the raw amino-acid sequence, 257 residues long: Thiazole synthase (257 aa).

The active-site Schiff-base intermediate with DXP is the K96. Residues G157, 184–185 (AG), and 206–207 (NT) contribute to the 1-deoxy-D-xylulose 5-phosphate site.

It belongs to the ThiG family. As to quaternary structure, homotetramer. Forms heterodimers with either ThiH or ThiS.

Its subcellular location is the cytoplasm. It carries out the reaction [ThiS sulfur-carrier protein]-C-terminal-Gly-aminoethanethioate + 2-iminoacetate + 1-deoxy-D-xylulose 5-phosphate = [ThiS sulfur-carrier protein]-C-terminal Gly-Gly + 2-[(2R,5Z)-2-carboxy-4-methylthiazol-5(2H)-ylidene]ethyl phosphate + 2 H2O + H(+). The protein operates within cofactor biosynthesis; thiamine diphosphate biosynthesis. In terms of biological role, catalyzes the rearrangement of 1-deoxy-D-xylulose 5-phosphate (DXP) to produce the thiazole phosphate moiety of thiamine. Sulfur is provided by the thiocarboxylate moiety of the carrier protein ThiS. In vitro, sulfur can be provided by H(2)S. This is Thiazole synthase from Bartonella bacilliformis (strain ATCC 35685 / KC583 / Herrer 020/F12,63).